Reading from the N-terminus, the 217-residue chain is Peptide methionine sulfoxide reductase MsrA 1 (217 aa).

Cys-54 is a catalytic residue.

It belongs to the MsrA Met sulfoxide reductase family.

It carries out the reaction L-methionyl-[protein] + [thioredoxin]-disulfide + H2O = L-methionyl-(S)-S-oxide-[protein] + [thioredoxin]-dithiol. The catalysed reaction is [thioredoxin]-disulfide + L-methionine + H2O = L-methionine (S)-S-oxide + [thioredoxin]-dithiol. Functionally, has an important function as a repair enzyme for proteins that have been inactivated by oxidation. Catalyzes the reversible oxidation-reduction of methionine sulfoxide in proteins to methionine. This is Peptide methionine sulfoxide reductase MsrA 1 (msrA1) from Caulobacter vibrioides (strain ATCC 19089 / CIP 103742 / CB 15) (Caulobacter crescentus).